Here is a 399-residue protein sequence, read N- to C-terminus: Coenzyme A biosynthesis bifunctional protein CoaBC (399 aa).

A phosphopantothenoylcysteine decarboxylase region spans residues 1 to 190 (MQTLAGKKIL…FQPKVLEGKS (190 aa)). Cys-159 acts as the Proton donor in catalysis. Residues 191–399 (ILISAGPTRE…KILEKMRELM (209 aa)) form a phosphopantothenate--cysteine ligase region. Residues Asp-279, Lys-289, 307–310 (PDIV), Phe-326, Lys-340, and Lys-344 contribute to the CTP site.

The protein in the N-terminal section; belongs to the HFCD (homo-oligomeric flavin containing Cys decarboxylase) superfamily. In the C-terminal section; belongs to the PPC synthetase family. Mg(2+) serves as cofactor. It depends on FMN as a cofactor.

The enzyme catalyses N-[(R)-4-phosphopantothenoyl]-L-cysteine + H(+) = (R)-4'-phosphopantetheine + CO2. It catalyses the reaction (R)-4'-phosphopantothenate + L-cysteine + CTP = N-[(R)-4-phosphopantothenoyl]-L-cysteine + CMP + diphosphate + H(+). The protein operates within cofactor biosynthesis; coenzyme A biosynthesis; CoA from (R)-pantothenate: step 2/5. It functions in the pathway cofactor biosynthesis; coenzyme A biosynthesis; CoA from (R)-pantothenate: step 3/5. Its function is as follows. Catalyzes two sequential steps in the biosynthesis of coenzyme A. In the first step cysteine is conjugated to 4'-phosphopantothenate to form 4-phosphopantothenoylcysteine. In the second step the latter compound is decarboxylated to form 4'-phosphopantotheine. The sequence is that of Coenzyme A biosynthesis bifunctional protein CoaBC from Vibrio parahaemolyticus serotype O3:K6 (strain RIMD 2210633).